Consider the following 78-residue polypeptide: Delta-conotoxin TxVIA (78 aa).

The first 22 residues, 1-22, serve as a signal peptide directing secretion; sequence MKLTCMMIVAVLFLTAWTFATA. A propeptide spanning residues 23–49 is cleaved from the precursor; that stretch reads DDSGNGLENLFSNAHHQMKNPEASKLN. Intrachain disulfides connect Cys-53–Cys-68, Cys-60–Cys-72, and Cys-67–Cys-77. Met-59 is modified (methionine sulfoxide; partial).

Belongs to the conotoxin O1 superfamily. Expressed by the venom duct. Is present in all duct parts with a highest content in part 4 (distal part near the pharynx).

It localises to the secreted. Functionally, delta-conotoxins bind to site 6 of voltage-gated sodium channels (Nav) and inhibit the inactivation process. Binding of this toxin is strongly calcium-dependent but not voltage-dependent. The binding site is most likely on the extracellular side of the sodium channel. Binds receptor sites on both mollusk and rat central nervous system, but despite its high affinity binding to rat sodium channel, it has no functional effect in vivo and in vitro on it. Also has no effect on Gambusia fish. Is important in mollusk for the paralysis of the prey. Upon injection of the peptide, a subordinate lobster assumes an exaggerated dominant posture (of a 'King-Kong' lobster!). The sequence is that of Delta-conotoxin TxVIA from Conus textile (Cloth-of-gold cone).